The primary structure comprises 370 residues: uncharacterized protein (370 aa).

The first 27 residues, 1-27 (MSSAANEGCVYLFIVVLRLSSFSCVNS), serve as a signal peptide directing secretion. N-linked (GlcNAc...) asparagine glycosylation is found at N59, N98, and N126. Disordered stretches follow at residues 81–101 (SRSH…NTTA) and 123–167 (LSEN…CHQP). Residues 139 to 148 (HDDDDDDDLE) are compositionally biased toward acidic residues. Residues N171, N221, N230, and N262 are each glycosylated (N-linked (GlcNAc...) asparagine).

This is an uncharacterized protein from Saccharomyces cerevisiae (strain ATCC 204508 / S288c) (Baker's yeast).